A 331-amino-acid chain; its full sequence is CRISPR-associated endonuclease Cas1 (331 aa).

The Mn(2+) site is built by E166, H228, and D243.

Belongs to the CRISPR-associated endonuclease Cas1 family. Homodimer, forms a heterotetramer with a Cas2 homodimer. Requires Mg(2+) as cofactor. Mn(2+) serves as cofactor.

Functionally, CRISPR (clustered regularly interspaced short palindromic repeat), is an adaptive immune system that provides protection against mobile genetic elements (viruses, transposable elements and conjugative plasmids). CRISPR clusters contain spacers, sequences complementary to antecedent mobile elements, and target invading nucleic acids. CRISPR clusters are transcribed and processed into CRISPR RNA (crRNA). Acts as a dsDNA endonuclease. Involved in the integration of spacer DNA into the CRISPR cassette. The polypeptide is CRISPR-associated endonuclease Cas1 (Hyperthermus butylicus (strain DSM 5456 / JCM 9403 / PLM1-5)).